A 382-amino-acid polypeptide reads, in one-letter code: V-set and immunoglobulin domain-containing protein 1 (382 aa).

Residues 1–21 form the signal peptide; that stretch reads MGLTFWKVFLILNCLAGQVNG. One can recognise an Ig-like V-type domain in the interval 22 to 133; sequence VQVTIPDSFV…FFGKNQGTIS (112 aa). The Extracellular segment spans residues 22-234; the sequence is VQVTIPDSFV…DLTTPYPGIG (213 aa). Asn32 is a glycosylation site (N-linked (GlcNAc...) asparagine). 2 disulfides stabilise this stretch: Cys43-Cys116 and Cys161-Cys211. The region spanning 140–227 is the Ig-like C2-type domain; it reads PSKPFCSIQG…GNSSCEIDLT (88 aa). 2 N-linked (GlcNAc...) asparagine glycosylation sites follow: Asn200 and Asn219. Residues 235–255 form a helical membrane-spanning segment; it reads IIVGAFVGTLIGVIIIISVVW. The Cytoplasmic segment spans residues 256-382; that stretch reads FVRRKVKAKG…FCDEEKVIKP (127 aa). The interval 266–382 is disordered; the sequence is KERKRNSKTT…FCDEEKVIKP (117 aa). Polar residues predominate over residues 273–285; it reads KTTTELEPMTKIN. The segment covering 286–298 has biased composition (basic and acidic residues); that stretch reads QRTEGETMPREDA. Residues 327–341 are compositionally biased toward pro residues; that stretch reads EPEPALQPTVEPPSG.

The protein localises to the membrane. The sequence is that of V-set and immunoglobulin domain-containing protein 1 (VSIG1) from Bos taurus (Bovine).